The sequence spans 389 residues: Phospho-N-acetylmuramoyl-pentapeptide-transferase (389 aa).

Transmembrane regions (helical) follow at residues 25 to 45 (RAVM…PFVI), 74 to 94 (MGGV…ADWG), 97 to 117 (FIWI…VDDY), 134 to 154 (FFWQ…SVSE), 190 to 210 (ISYP…IVGS), 222 to 242 (GLVI…AYVM), 259 to 279 (AGEL…FLWF), 286 to 306 (VFMG…IAVI), 311 to 331 (IVLF…MLQV), and 366 to 386 (QVVV…LSTL).

Belongs to the glycosyltransferase 4 family. MraY subfamily. Requires Mg(2+) as cofactor.

It localises to the cell inner membrane. The catalysed reaction is UDP-N-acetyl-alpha-D-muramoyl-L-alanyl-gamma-D-glutamyl-meso-2,6-diaminopimeloyl-D-alanyl-D-alanine + di-trans,octa-cis-undecaprenyl phosphate = di-trans,octa-cis-undecaprenyl diphospho-N-acetyl-alpha-D-muramoyl-L-alanyl-D-glutamyl-meso-2,6-diaminopimeloyl-D-alanyl-D-alanine + UMP. It functions in the pathway cell wall biogenesis; peptidoglycan biosynthesis. Catalyzes the initial step of the lipid cycle reactions in the biosynthesis of the cell wall peptidoglycan: transfers peptidoglycan precursor phospho-MurNAc-pentapeptide from UDP-MurNAc-pentapeptide onto the lipid carrier undecaprenyl phosphate, yielding undecaprenyl-pyrophosphoryl-MurNAc-pentapeptide, known as lipid I. This chain is Phospho-N-acetylmuramoyl-pentapeptide-transferase, found in Ralstonia pickettii (strain 12J).